Reading from the N-terminus, the 209-residue chain is Cilia- and flagella-associated protein 418 (209 aa).

Residues 1–76 form a required for interaction with FAM161A region; sequence MAKDLDELLD…LINEIFEEPD (76 aa). Residues 24–58 are disordered; sequence LDLGERPKGDGGGGSHSGDRNGAQEKETLRSTETF. A compositionally biased stretch (basic and acidic residues) spans 40–58; that stretch reads SGDRNGAQEKETLRSTETF.

In terms of assembly, interacts (via N-terminus) with FAM161A (via central region); the interaction is direct. As to expression, expressed in multiple tissues, including the brain, kidney, lung, spleen, heart, trachea and testis. Expressed in the retina (at protein level).

The protein localises to the cytoplasm. It localises to the photoreceptor inner segment. Functionally, may be involved in photoreceptor outer segment disk morphogenesis. In Mus musculus (Mouse), this protein is Cilia- and flagella-associated protein 418.